Here is a 568-residue protein sequence, read N- to C-terminus: Protein yellow (568 aa).

The first 28 residues, 1–28, serve as a signal peptide directing secretion; sequence MHAQDKGGVLPGLSLLLIAVAMVCPSQA. 2 N-linked (GlcNAc...) asparagine glycosylation sites follow: Asn151 and Asn222.

It belongs to the major royal jelly protein family.

Its subcellular location is the secreted. Controls the pigmentation pattern of the adult cuticle and larval mouth parts. This chain is Protein yellow (y), found in Drosophila guanche (Fruit fly).